Reading from the N-terminus, the 175-residue chain is Inosine/xanthosine triphosphatase (175 aa).

Threonine 8–lysine 13 is a binding site for substrate. Mg(2+)-binding residues include glutamate 38 and glutamate 68. Residue glutamate 68–alanine 69 coordinates substrate.

Belongs to the YjjX NTPase family. Homodimer. It depends on Mg(2+) as a cofactor. Mn(2+) serves as cofactor.

It carries out the reaction XTP + H2O = XDP + phosphate + H(+). The enzyme catalyses ITP + H2O = IDP + phosphate + H(+). Phosphatase that hydrolyzes non-canonical purine nucleotides such as XTP and ITP to their respective diphosphate derivatives. Probably excludes non-canonical purines from DNA/RNA precursor pool, thus preventing their incorporation into DNA/RNA and avoiding chromosomal lesions. The polypeptide is Inosine/xanthosine triphosphatase (yjjX) (Escherichia coli O127:H6 (strain E2348/69 / EPEC)).